Consider the following 498-residue polypeptide: ATP synthase subunit beta, chloroplastic (498 aa).

172–179 (GGAGVGKT) lines the ATP pocket.

The protein belongs to the ATPase alpha/beta chains family. F-type ATPases have 2 components, CF(1) - the catalytic core - and CF(0) - the membrane proton channel. CF(1) has five subunits: alpha(3), beta(3), gamma(1), delta(1), epsilon(1). CF(0) has four main subunits: a(1), b(1), b'(1) and c(9-12).

The protein resides in the plastid. It is found in the chloroplast thylakoid membrane. The catalysed reaction is ATP + H2O + 4 H(+)(in) = ADP + phosphate + 5 H(+)(out). Produces ATP from ADP in the presence of a proton gradient across the membrane. The catalytic sites are hosted primarily by the beta subunits. This is ATP synthase subunit beta, chloroplastic from Phaseolus vulgaris (Kidney bean).